A 109-amino-acid chain; its full sequence is Small ribosomal subunit protein uS17 (109 aa).

The protein belongs to the universal ribosomal protein uS17 family. In terms of assembly, part of the 30S ribosomal subunit.

Its function is as follows. One of the primary rRNA binding proteins, it binds specifically to the 5'-end of 16S ribosomal RNA. The protein is Small ribosomal subunit protein uS17 of Thermoplasma volcanium (strain ATCC 51530 / DSM 4299 / JCM 9571 / NBRC 15438 / GSS1).